Consider the following 119-residue polypeptide: Large ribosomal subunit protein P3z (119 aa).

Positions 79-90 are enriched in gly residues; sequence AGGAASSGGGAG. Residues 79-119 form a disordered region; the sequence is AGGAASSGGGAGEAAAAPKEDEKKKEESEEEEGDFGFDLFG. Residues 96–105 are compositionally biased toward basic and acidic residues; it reads PKEDEKKKEE.

Belongs to the eukaryotic ribosomal protein P1/P2 family. In terms of processing, phosphorylated.

In terms of biological role, plays an important role in the elongation step of protein synthesis. The polypeptide is Large ribosomal subunit protein P3z (RPP3A) (Arabidopsis thaliana (Mouse-ear cress)).